Reading from the N-terminus, the 207-residue chain is FMN-dependent NADH:quinone oxidoreductase (207 aa).

Serine 10 serves as a coordination point for FMN.

This sequence belongs to the azoreductase type 1 family. Homodimer. It depends on FMN as a cofactor.

It carries out the reaction 2 a quinone + NADH + H(+) = 2 a 1,4-benzosemiquinone + NAD(+). It catalyses the reaction N,N-dimethyl-1,4-phenylenediamine + anthranilate + 2 NAD(+) = 2-(4-dimethylaminophenyl)diazenylbenzoate + 2 NADH + 2 H(+). Functionally, quinone reductase that provides resistance to thiol-specific stress caused by electrophilic quinones. In terms of biological role, also exhibits azoreductase activity. Catalyzes the reductive cleavage of the azo bond in aromatic azo compounds to the corresponding amines. The chain is FMN-dependent NADH:quinone oxidoreductase from Shouchella clausii (strain KSM-K16) (Alkalihalobacillus clausii).